The primary structure comprises 150 residues: Endoribonuclease YbeY (150 aa).

Zn(2+)-binding residues include H116, H120, and H126.

It belongs to the endoribonuclease YbeY family. Zn(2+) is required as a cofactor.

The protein resides in the cytoplasm. Its function is as follows. Single strand-specific metallo-endoribonuclease involved in late-stage 70S ribosome quality control and in maturation of the 3' terminus of the 16S rRNA. This chain is Endoribonuclease YbeY, found in Beutenbergia cavernae (strain ATCC BAA-8 / DSM 12333 / CCUG 43141 / JCM 11478 / NBRC 16432 / NCIMB 13614 / HKI 0122).